A 125-amino-acid polypeptide reads, in one-letter code: Hydrogenase maturation factor HypA (125 aa).

A Ni(2+)-binding site is contributed by H2. Zn(2+) is bound by residues C73, C76, C96, and C99.

It belongs to the HypA/HybF family.

Involved in the maturation of [NiFe] hydrogenases. Required for nickel insertion into the metal center of the hydrogenase. In Methanobrevibacter smithii (strain ATCC 35061 / DSM 861 / OCM 144 / PS), this protein is Hydrogenase maturation factor HypA.